Here is a 392-residue protein sequence, read N- to C-terminus: Speckle-type POZ protein-like (392 aa).

The MATH domain occupies 31–161; sequence KFSYMWTINN…DDKLTLYCEV (131 aa). In terms of domain architecture, BTB spans 200–267; the sequence is TDCSLFVEGK…IYTGGTPHVD (68 aa).

It belongs to the Tdpoz family. In terms of assembly, homodimer. Heterodimer with SPOP. Component of cullin-RING-based BCR (BTB-CUL3-RBX1) E3 ubiquitin-protein ligase complexes containing homodimeric SPOPL or the heterodimer formed by SPOP and SPOPL.

The protein resides in the nucleus. Its pathway is protein modification; protein ubiquitination. Its function is as follows. Component of a cullin-RING-based BCR (BTB-CUL3-RBX1) E3 ubiquitin-protein ligase complex that mediates the ubiquitination and subsequent proteasomal degradation of target proteins, but with relatively low efficiency. This chain is Speckle-type POZ protein-like (spopl), found in Xenopus laevis (African clawed frog).